Here is a 699-residue protein sequence, read N- to C-terminus: Elongation factor G (699 aa).

Positions 8–290 constitute a tr-type G domain; sequence ERYRNIGIMA…GVIEYLPSPV (283 aa). GTP is bound by residues 17-24, 88-92, and 142-145; these read AHIDAGKT, DTPGH, and NKMD.

The protein belongs to the TRAFAC class translation factor GTPase superfamily. Classic translation factor GTPase family. EF-G/EF-2 subfamily.

It is found in the cytoplasm. In terms of biological role, catalyzes the GTP-dependent ribosomal translocation step during translation elongation. During this step, the ribosome changes from the pre-translocational (PRE) to the post-translocational (POST) state as the newly formed A-site-bound peptidyl-tRNA and P-site-bound deacylated tRNA move to the P and E sites, respectively. Catalyzes the coordinated movement of the two tRNA molecules, the mRNA and conformational changes in the ribosome. This is Elongation factor G from Alkalilimnicola ehrlichii (strain ATCC BAA-1101 / DSM 17681 / MLHE-1).